We begin with the raw amino-acid sequence, 235 residues long: Homeobox-leucine zipper protein ATHB-12 (235 aa).

Residues 27–86 (KSNNQKRFSEEQIKSLELIFESETRLEPRKKVQVARELGLQPRQVAIWFQNKRARWKTKQ) constitute a DNA-binding region (homeobox). The leucine-zipper stretch occupies residues 87–122 (LEKEYNTLRANYNNLASQFEIMKKEKQSLVSELQRL). 2 stretches are compositionally biased toward basic and acidic residues: residues 128 to 138 (RPKEEKHHECC) and 152 to 162 (HNGKSEPEGRL). Residues 128 to 167 (RPKEEKHHECCGDQGLALSSSTESHNGKSEPEGRLDQGSV) form a disordered region.

It belongs to the HD-ZIP homeobox family. Class I subfamily. Interacts with TFIIB1. In terms of tissue distribution, widely expressed.

The protein localises to the nucleus. Functionally, probable transcription activator that may act as growth regulators in response to water deficit. The sequence is that of Homeobox-leucine zipper protein ATHB-12 (ATHB-12) from Arabidopsis thaliana (Mouse-ear cress).